The following is a 75-amino-acid chain: Small ribosomal subunit protein eS31 (75 aa).

Zn(2+) contacts are provided by Cys-41, Cys-44, Cys-60, and Cys-63. Residues 41 to 63 (CPRCGSIMAHHLKPNERWSCGKC) form a C4-type zinc finger.

The protein belongs to the eukaryotic ribosomal protein eS31 family. In terms of assembly, part of the 30S ribosomal subunit. Zn(2+) serves as cofactor.

In Saccharolobus solfataricus (strain ATCC 35092 / DSM 1617 / JCM 11322 / P2) (Sulfolobus solfataricus), this protein is Small ribosomal subunit protein eS31.